Consider the following 214-residue polypeptide: MRIILLGAPGAGKGTQAQFIMEKYGIPQISTGDMLRAAVKAGSELGKQAKAIMDAGKLVTDELVIALVKERIAQEDCHNGFLLDGFPRTIPQADAMKEAGINVDYVLEFAVPDELIVDRIIGRRVHPGSGRVYHVKFNPPQVEGKDDVTGEDLMTRKDDQEETVRKRLVEYHQQTAPLIGYYGQEAQAGNTRYVKIDGTQSVDSVRAELENVLG.

10-15 (GAGKGT) contributes to the ATP binding site. The interval 30–59 (STGDMLRAAVKAGSELGKQAKAIMDAGKLV) is NMP. Residues Thr31, Arg36, 57–59 (KLV), 85–88 (GFPR), and Gln92 contribute to the AMP site. Positions 122 to 159 (GRRVHPGSGRVYHVKFNPPQVEGKDDVTGEDLMTRKDD) are LID. Residues Arg123 and 132–133 (VY) contribute to the ATP site. AMP is bound by residues Arg156 and Arg167. Position 200 (Gln200) interacts with ATP.

This sequence belongs to the adenylate kinase family. As to quaternary structure, monomer.

The protein resides in the cytoplasm. It carries out the reaction AMP + ATP = 2 ADP. The protein operates within purine metabolism; AMP biosynthesis via salvage pathway; AMP from ADP: step 1/1. In terms of biological role, catalyzes the reversible transfer of the terminal phosphate group between ATP and AMP. Plays an important role in cellular energy homeostasis and in adenine nucleotide metabolism. In Edwardsiella ictaluri (strain 93-146), this protein is Adenylate kinase.